Reading from the N-terminus, the 744-residue chain is FHF complex subunit HOOK-interacting protein 2B (744 aa).

2 disordered regions span residues 184-213 (KTARESTAPPKDIAGYRDKDCPHSDALNRD) and 510-530 (LDSGLQPSTKPPPAPATSSDG). The span at 197-213 (AGYRDKDCPHSDALNRD) shows a compositional bias: basic and acidic residues.

It belongs to the FHIP family. Expressed in colon.

Functionally, able to activate MAPK/ERK and TGFB signaling pathways. May regulate the activity of genes involved in intestinal barrier function and immunoprotective inflammation. May play a role in cell proliferation. This Mus musculus (Mouse) protein is FHF complex subunit HOOK-interacting protein 2B.